We begin with the raw amino-acid sequence, 196 residues long: Imidazoleglycerol-phosphate dehydratase (196 aa).

It belongs to the imidazoleglycerol-phosphate dehydratase family.

The protein localises to the cytoplasm. The catalysed reaction is D-erythro-1-(imidazol-4-yl)glycerol 3-phosphate = 3-(imidazol-4-yl)-2-oxopropyl phosphate + H2O. It participates in amino-acid biosynthesis; L-histidine biosynthesis; L-histidine from 5-phospho-alpha-D-ribose 1-diphosphate: step 6/9. The polypeptide is Imidazoleglycerol-phosphate dehydratase (Akkermansia muciniphila (strain ATCC BAA-835 / DSM 22959 / JCM 33894 / BCRC 81048 / CCUG 64013 / CIP 107961 / Muc)).